An 843-amino-acid chain; its full sequence is Potassium transporter 10 (843 aa).

A compositionally biased stretch (low complexity) spans 1-15; that stretch reads MKSPSPVDPESPSSP. The disordered stretch occupies residues 1-25; that stretch reads MKSPSPVDPESPSSPDCKGGSSSKR. Residues 1 to 34 lie on the Cytoplasmic side of the membrane; it reads MKSPSPVDPESPSSPDCKGGSSSKRRRLPWRMTM. Residues 35–55 form a helical membrane-spanning segment; it reads SLAYQSLGVVYGDLSTSPLYV. Residues 56 to 72 are Vacuolar-facing; that stretch reads YKAAFAEDIQHSETNEE. A helical membrane pass occupies residues 73-93; sequence ILGVLSFVFWTLTLVPLLKYV. Residues 94-183 lie on the Cytoplasmic side of the membrane; that stretch reads CVVLRADDNG…LLERHKVLQR (90 aa). The helical transmembrane segment at 184–204 threads the bilayer; the sequence is VLLVLALVGTCMVIGDGVLTP. Residues 205 to 225 are Vacuolar-facing; it reads AISVFSAVSGLELSMEKHQHK. Residues 226–246 traverse the membrane as a helical segment; sequence YVEVPIACFVLVCLFCLQHYG. The Cytoplasmic segment spans residues 247 to 249; that stretch reads THR. A helical membrane pass occupies residues 250–270; sequence VGFLFAPIVITWLLCISMIGV. At 271–298 the chain is on the vacuolar side; the sequence is YNIVHWEPNVYRALSPYYMYKFLKKTQR. The chain crosses the membrane as a helical span at residues 299–319; it reads GGWMSLGGILLCITGSEAMFA. The Cytoplasmic portion of the chain corresponds to 320 to 326; sequence DLGHFNQ. The chain crosses the membrane as a helical span at residues 327–347; that stretch reads LSIQIAFTCMVYPSLILAYMG. The Vacuolar segment spans residues 348-377; the sequence is QAAYLCKHHIIESDYRIGFYVSVPEKIRWP. Residues 378–398 traverse the membrane as a helical segment; it reads VLAIAILAAVVGSQAVITGTF. Topologically, residues 399 to 425 are cytoplasmic; that stretch reads SMIKQCTALGCFPRVKIVHTSDKVHGQ. The chain crosses the membrane as a helical span at residues 426–446; the sequence is IYIPEINWILMILCLAITIGF. Residues 447–451 are Vacuolar-facing; that stretch reads RDTKH. A helical transmembrane segment spans residues 452 to 472; that stretch reads LGNASGLAVITVMLVTTCLMS. Residues 473–482 are Cytoplasmic-facing; the sequence is LVIVLCWHKS. A helical transmembrane segment spans residues 483–505; the sequence is IFLAFGFIIFFGTIEALYFSASL. Topologically, residues 506 to 510 are vacuolar; the sequence is IKFRE. A helical membrane pass occupies residues 511–531; that stretch reads GAWVPIVLAFIFMAIMCIWHY. Over 532–843 the chain is Cytoplasmic; that stretch reads GTIKKYEFDL…TLEVGMIYYV (312 aa). Residues 667–747 form a disordered region; it reads AASSKPKNVC…IMSPSPSPPP (81 aa). Over residues 718 to 735 the composition is skewed to gly residues; that stretch reads GGSGSGSGRGSSRGGGGA.

Belongs to the HAK/KUP transporter (TC 2.A.72.3) family. Expressed in roots, shoots, and panicle at flowering stage.

Its subcellular location is the vacuole membrane. Functionally, high-affinity potassium transporter. The polypeptide is Potassium transporter 10 (HAK10) (Oryza sativa subsp. japonica (Rice)).